The primary structure comprises 186 residues: Peptide deformylase 2 (186 aa).

C104 and H146 together coordinate Fe cation. E147 is an active-site residue. Fe cation is bound at residue H150.

This sequence belongs to the polypeptide deformylase family. Requires Fe(2+) as cofactor.

It catalyses the reaction N-terminal N-formyl-L-methionyl-[peptide] + H2O = N-terminal L-methionyl-[peptide] + formate. In terms of biological role, removes the formyl group from the N-terminal Met of newly synthesized proteins. Requires at least a dipeptide for an efficient rate of reaction. N-terminal L-methionine is a prerequisite for activity but the enzyme has broad specificity at other positions. The chain is Peptide deformylase 2 from Streptomyces avermitilis (strain ATCC 31267 / DSM 46492 / JCM 5070 / NBRC 14893 / NCIMB 12804 / NRRL 8165 / MA-4680).